Here is an 841-residue protein sequence, read N- to C-terminus: Formin-like protein 10 (841 aa).

The signal sequence occupies residues methionine 1–alanine 25. Residues leucine 102–phenylalanine 122 traverse the membrane as a helical segment. Disordered regions lie at residues serine 137–leucine 166, isoleucine 254–arginine 297, and lysine 403–arginine 512. The span at serine 139–leucine 152 shows a compositional bias: polar residues. Residues isoleucine 254–proline 278 show a composition bias toward low complexity. The segment covering histidine 279–glutamate 293 has biased composition (polar residues). Over residues leucine 426–proline 444 the composition is skewed to pro residues. The region spanning glutamate 469–alanine 841 is the FH2 domain. Over residues tyrosine 502–arginine 512 the composition is skewed to polar residues.

Belongs to the formin-like family. Class-I subfamily.

It localises to the membrane. Its function is as follows. Might be involved in the organization and polarity of the actin cytoskeleton. The protein is Formin-like protein 10 (FH10) of Arabidopsis thaliana (Mouse-ear cress).